The sequence spans 99 residues: Aspartyl/glutamyl-tRNA(Asn/Gln) amidotransferase subunit C (99 aa).

Belongs to the GatC family. Heterotrimer of A, B and C subunits.

The catalysed reaction is L-glutamyl-tRNA(Gln) + L-glutamine + ATP + H2O = L-glutaminyl-tRNA(Gln) + L-glutamate + ADP + phosphate + H(+). It carries out the reaction L-aspartyl-tRNA(Asn) + L-glutamine + ATP + H2O = L-asparaginyl-tRNA(Asn) + L-glutamate + ADP + phosphate + 2 H(+). In terms of biological role, allows the formation of correctly charged Asn-tRNA(Asn) or Gln-tRNA(Gln) through the transamidation of misacylated Asp-tRNA(Asn) or Glu-tRNA(Gln) in organisms which lack either or both of asparaginyl-tRNA or glutaminyl-tRNA synthetases. The reaction takes place in the presence of glutamine and ATP through an activated phospho-Asp-tRNA(Asn) or phospho-Glu-tRNA(Gln). The polypeptide is Aspartyl/glutamyl-tRNA(Asn/Gln) amidotransferase subunit C (Polaromonas sp. (strain JS666 / ATCC BAA-500)).